The primary structure comprises 157 residues: Acetyltransferase PseH (157 aa).

The N-acetyltransferase domain occupies 5–152; the sequence is KNFAELNSQE…YYVCLKQSHC (148 aa).

Catalyzes the third step in the biosynthesis of pseudaminic acid, a sialic-acid-like sugar that is used to modify flagellin. Mediates N-4 acetylation of UDP-4-amino-4,6-dideoxy-beta-L-AltNAc to form UDP-2,4-diacetamido-2,4,6-trideoxy-beta-L-altropyranose. This is Acetyltransferase PseH (pseH) from Campylobacter jejuni subsp. jejuni serotype O:2 (strain ATCC 700819 / NCTC 11168).